We begin with the raw amino-acid sequence, 65 residues long: Period circadian protein (65 aa).

Residues glutamate 1–lysine 65 form a disordered region. Residues valine 18–asparagine 28 are compositionally biased toward polar residues. Residues alanine 29–asparagine 38 are compositionally biased toward low complexity. Residues valine 56–lysine 65 are compositionally biased toward polar residues.

As to quaternary structure, forms a heterodimer with timeless (TIM); the complex then translocates into the nucleus. In terms of processing, phosphorylated with a circadian rhythmicity, probably by the double-time protein (dbt). Phosphorylation could be implicated in the stability of per monomer and in the formation of heterodimer per-tim.

It localises to the nucleus. It is found in the cytoplasm. The protein resides in the perinuclear region. Functionally, essential for biological clock functions. Determines the period length of circadian and ultradian rhythms; an increase in PER dosage leads to shortened circadian rhythms and a decrease leads to lengthened circadian rhythms. Essential for the circadian rhythmicity of locomotor activity, eclosion behavior, and for the rhythmic component of the male courtship song that originates in the thoracic nervous system. The biological cycle depends on the rhythmic formation and nuclear localization of the TIM-PER complex. Light induces the degradation of TIM, which promotes elimination of PER. Nuclear activity of the heterodimer coordinatively regulates PER and TIM transcription through a negative feedback loop. Behaves as a negative element in circadian transcriptional loop. Does not appear to bind DNA, suggesting indirect transcriptional inhibition. The polypeptide is Period circadian protein (per) (Drosophila mojavensis (Fruit fly)).